The sequence spans 502 residues: Probable cytochrome P450 554A1 (502 aa).

A helical membrane pass occupies residues 3 to 20 (LLLFIFFLILFYYSVKYY). Position 448 (Cys448) interacts with heme.

It belongs to the cytochrome P450 family. It depends on heme as a cofactor.

The protein localises to the membrane. The sequence is that of Probable cytochrome P450 554A1 (cyp554A1) from Dictyostelium discoideum (Social amoeba).